We begin with the raw amino-acid sequence, 796 residues long: Volume-regulated anion channel subunit LRRC8E (796 aa).

At 1-22 (MIPVAEFKQFTEQQPAFKVLKP) the chain is on the cytoplasmic side. Residues 23–43 (WWDVLAEYLTVAMLMIGVFGC) traverse the membrane as a helical segment. Residues 44–116 (TLQVTQDKII…YETALHWYAK (73 aa)) lie on the Extracellular side of the membrane. Residues Cys-54 and Cys-301 are joined by a disulfide bond. An N-linked (GlcNAc...) asparagine glycan is attached at Asn-63. Residues 117-137 (YFPYLVVIHTLIFMVCTSFWF) traverse the membrane as a helical segment. Residues 138 to 265 (KFPGTSSKIE…IRQTVLKVCK (128 aa)) are Cytoplasmic-facing. The chain crosses the membrane as a helical span at residues 266-286 (FLAILVYNLVYVEKISFLVAC). Residues 287 to 313 (RVETSEVTGYASFCCNHTKAHLFSKLA) lie on the Extracellular side of the membrane. N-linked (GlcNAc...) asparagine glycosylation is present at Asn-302. The chain crosses the membrane as a helical span at residues 314-334 (FCYISFVCIYGLTCIYTLYWL). Topologically, residues 335-796 (FHRPLKEYSF…AEVRDKMEEE (462 aa)) are cytoplasmic. 11 LRR repeats span residues 508–529 (GLEELHLEGLFPQELARAATLE), 536–557 (QLKVLSLRSNAGKVPASVTDVA), 559–579 (HLQRLSLHNDGARLVALNSLK), 583–604 (ALRELELVACGLERIPHAVFSL), 606–627 (ALQELDLKDNHLRSIEEILSFQ), 631–652 (KLVTLRLWHNQIAYVPEHVRKL), 654–675 (SLEQLYLSYNKLETLPSQLGLC), 677–698 (GLRLLDVSHNGLHSLPPEVGLL), 700–721 (NLQHLALSYNALEALPEELFFC), 723–744 (KLRTLLLGDNQLSQLSPHVGAL), and 746–767 (ALSRLELKGNRLEALPEELGNC).

The protein belongs to the LRRC8 family. In terms of assembly, heterohexamer; oligomerizes with other LRRC8 proteins (LRRC8A, LRRC8C, LRRC8D and/or LRRC8B) to form a heterohexamer. In vivo, the subunit composition may depend primarily on expression levels, and heterooligomeric channels containing various proportions of the different LRRC8 proteins may coexist.

Its subcellular location is the cell membrane. It localises to the endoplasmic reticulum membrane. The protein resides in the lysosome membrane. It carries out the reaction chloride(in) = chloride(out). The catalysed reaction is iodide(out) = iodide(in). It catalyses the reaction taurine(out) = taurine(in). The enzyme catalyses 2',3'-cGAMP(out) = 2',3'-cGAMP(in). Its function is as follows. Non-essential component of the volume-regulated anion channel (VRAC, also named VSOAC channel), an anion channel required to maintain a constant cell volume in response to extracellular or intracellular osmotic changes. The VRAC channel conducts iodide better than chloride and can also conduct organic osmolytes like taurine. Mediates efflux of amino acids, such as aspartate, in response to osmotic stress. The VRAC channel also mediates transport of immunoreactive cyclic dinucleotide GMP-AMP (2'-3'-cGAMP), an immune messenger produced in response to DNA virus in the cytosol. Channel activity requires LRRC8A plus at least one other family member (LRRC8B, LRRC8C, LRRC8D or LRRC8E); channel characteristics depend on the precise subunit composition. Also plays a role in lysosome homeostasis by forming functional lysosomal VRAC channels in response to low cytoplasmic ionic strength condition: lysosomal VRAC channels are necessary for the formation of large lysosome-derived vacuoles, which store and then expel excess water to maintain cytosolic water homeostasis. The protein is Volume-regulated anion channel subunit LRRC8E of Homo sapiens (Human).